A 549-amino-acid chain; its full sequence is Glucose-6-phosphate isomerase (549 aa).

N6-acetyllysine occurs at positions 80, 228, and 234. Residue glutamate 355 is the Proton donor of the active site. Residues histidine 386 and lysine 514 contribute to the active site.

The protein belongs to the GPI family.

The protein resides in the cytoplasm. It carries out the reaction alpha-D-glucose 6-phosphate = beta-D-fructose 6-phosphate. The protein operates within carbohydrate biosynthesis; gluconeogenesis. It functions in the pathway carbohydrate degradation; glycolysis; D-glyceraldehyde 3-phosphate and glycerone phosphate from D-glucose: step 2/4. Functionally, catalyzes the reversible isomerization of glucose-6-phosphate to fructose-6-phosphate. In Shigella flexneri, this protein is Glucose-6-phosphate isomerase.